A 520-amino-acid chain; its full sequence is 2-isopropylmalate synthase (520 aa).

One can recognise a Pyruvate carboxyltransferase domain in the interval 5–267 (VIIFDTTLRD…HTNINHQEIY (263 aa)). Positions 14, 202, 204, and 238 each coordinate Mn(2+). The interval 392–520 (RLDYFSVQSG…RLQQNNQEMV (129 aa)) is regulatory domain.

Belongs to the alpha-IPM synthase/homocitrate synthase family. LeuA type 1 subfamily. Homodimer. The cofactor is Mn(2+).

The protein localises to the cytoplasm. It carries out the reaction 3-methyl-2-oxobutanoate + acetyl-CoA + H2O = (2S)-2-isopropylmalate + CoA + H(+). It participates in amino-acid biosynthesis; L-leucine biosynthesis; L-leucine from 3-methyl-2-oxobutanoate: step 1/4. In terms of biological role, catalyzes the condensation of the acetyl group of acetyl-CoA with 3-methyl-2-oxobutanoate (2-ketoisovalerate) to form 3-carboxy-3-hydroxy-4-methylpentanoate (2-isopropylmalate). The sequence is that of 2-isopropylmalate synthase from Yersinia pseudotuberculosis serotype O:1b (strain IP 31758).